The chain runs to 488 residues: GTPase Der (488 aa).

EngA-type G domains follow at residues 3–166 and 199–372; these read PVVA…AEAM and IKLA…DSAT. GTP contacts are provided by residues 9–16, 56–60, 118–121, 205–212, 252–256, and 317–320; these read GRPNVGKS, DTGGI, NKVD, GKPNVGKS, DTAGV, and NKWD. Positions 373-457 constitute a KH-like domain; sequence RRVSTSMLTR…PIQLRFQEGD (85 aa). The disordered stretch occupies residues 469-488; sequence MSQERRRKRALSHIKDRKTK. Residues 473–488 are compositionally biased toward basic residues; it reads RRRKRALSHIKDRKTK.

The protein belongs to the TRAFAC class TrmE-Era-EngA-EngB-Septin-like GTPase superfamily. EngA (Der) GTPase family. In terms of assembly, associates with the 50S ribosomal subunit.

In terms of biological role, GTPase that plays an essential role in the late steps of ribosome biogenesis. The polypeptide is GTPase Der (Shewanella sp. (strain W3-18-1)).